A 133-amino-acid chain; its full sequence is ATP synthase epsilon chain (133 aa).

It belongs to the ATPase epsilon chain family. F-type ATPases have 2 components, CF(1) - the catalytic core - and CF(0) - the membrane proton channel. CF(1) has five subunits: alpha(3), beta(3), gamma(1), delta(1), epsilon(1). CF(0) has three main subunits: a, b and c.

Its subcellular location is the cell membrane. Functionally, produces ATP from ADP in the presence of a proton gradient across the membrane. In Mycoplasma pneumoniae (strain ATCC 29342 / M129 / Subtype 1) (Mycoplasmoides pneumoniae), this protein is ATP synthase epsilon chain (atpC).